The primary structure comprises 107 residues: UPF0060 membrane protein ZMO1566 (107 aa).

The next 4 membrane-spanning stretches (helical) occupy residues 4–24 (LLYI…WAWI), 29–49 (SPLW…LLTF), 55–75 (AGKA…LWSW), and 84–104 (HWDL…LWMP).

Belongs to the UPF0060 family.

The protein resides in the cell inner membrane. The chain is UPF0060 membrane protein ZMO1566 from Zymomonas mobilis subsp. mobilis (strain ATCC 31821 / ZM4 / CP4).